The chain runs to 136 residues: Transmembrane protein 203 (136 aa).

Residues 1–51 form an interaction with STING1 region; that stretch reads MLFSLRELVQWLGFATFEIFVHLLALLVFSVLLALRVDGLTPGLSWWNVFV. Transmembrane regions (helical) follow at residues 14-34, 50-72, 81-101, and 112-132; these read FATF…VLLA, FVPF…VRLF, VLRL…EMLL, and LWFG…MIRA. Positions 52-136 are required for lysosomal localization of the STING-TMEM203 complex; that stretch reads PFFAADGLST…LLMIRACRVN (85 aa).

As to quaternary structure, homodimer. Interacts with ATP2A2 and ITPR3. Interacts with STIM1 and STING1 (via transmembrane domain).

The protein localises to the endoplasmic reticulum membrane. It localises to the endoplasmic reticulum-Golgi intermediate compartment. It is found in the lysosome membrane. Functionally, involved in the regulation of cellular calcium homeotasis. Required for spermatogenesis. Acts as a regulator of STING-mediated inflammatory signaling in macrophages. Forms a complex with STING, promoting the activity of TBK1 kinase and the transcription factor IRF3, leading to activation of type I interferon expression. The polypeptide is Transmembrane protein 203 (Tmem203) (Mus musculus (Mouse)).